The following is a 1323-amino-acid chain: Glutamate receptor ionotropic, NMDA 2D (1323 aa).

The first 27 residues, 1–27, serve as a signal peptide directing secretion; sequence MRGAGGPRGPRGPAKMLLLLALACASP. Topologically, residues 28–579 are extracellular; the sequence is FPEEVPGPGA…SPSAFLEPYS (552 aa). Asn89 carries N-linked (GlcNAc...) asparagine glycosylation. Cys101 and Cys345 are disulfide-bonded. N-linked (GlcNAc...) asparagine glycosylation is found at Asn349, Asn363, Asn381, and Asn464. 2 disulfides stabilise this stretch: Cys452-Cys480 and Cys459-Cys481. L-glutamate is bound by residues Ser536, Thr538, and Arg543. Asn566 is a glycosylation site (N-linked (GlcNAc...) asparagine). The helical transmembrane segment at 580 to 601 threads the bilayer; sequence PAVWVMMFVMCLTVVAVTVFIF. At 602–626 the chain is on the cytoplasmic side; sequence EYLSPVGYNRSLATGKRPGGSTFTI. The segment at residues 627–638 is an intramembrane region (discontinuously helical); the sequence is GKSIWLLWALVF. The tract at residues 628 to 647 is pore-forming; sequence KSIWLLWALVFNNSVPVENP. Topologically, residues 639–650 are cytoplasmic; that stretch reads NNSVPVENPRGT. The chain crosses the membrane as a helical span at residues 651-671; it reads TSKIMVLVWAFFAVIFLASYT. The Extracellular segment spans residues 672–840; the sequence is ANLAAFMIQE…EVMSSKLDID (169 aa). Residue Asn712 is glycosylated (N-linked (GlcNAc...) asparagine). L-glutamate is bound by residues Ser714, Thr715, and Asp756. A disulfide bridge connects residues Cys770 and Cys825. A helical transmembrane segment spans residues 841–864; sequence NMAGVFYMLLVAMGLSLLVFAWEH. At 865-1323 the chain is on the cytoplasmic side; it reads LVYWRLRHCL…AHFSSLESEV (459 aa). 3 disordered regions span residues 897 to 952, 977 to 1112, and 1201 to 1323; these read EAAP…PGGA, AAPR…SLGG, and PWAA…ESEV. Residues 899-929 show a composition bias toward pro residues; the sequence is APPPAKPPPPPQPLPSPAYPAARPPPGPAPF. Positions 931–940 are enriched in basic and acidic residues; that stretch reads PRERAAADRW. The segment covering 977-986 has biased composition (low complexity); it reads AAPRGAAGRP. The span at 987-1001 shows a compositional bias: pro residues; sequence LSPPTTQPPQKPPPS. Over residues 1030 to 1039 the composition is skewed to low complexity; it reads AAAAAAVGPP. The span at 1080–1092 shows a compositional bias: pro residues; that stretch reads TAPPPRRAAPPPC. The span at 1208-1228 shows a compositional bias: basic residues; sequence PRRRARCGCPRPHPHRPRASH. At Arg1303 the chain carries Omega-N-methylarginine. Ser1313 is modified (phosphoserine). The PDZ-binding signature appears at 1321 to 1323; it reads SEV.

This sequence belongs to the glutamate-gated ion channel (TC 1.A.10.1) family. NR2D/GRIN2D subfamily. Heterotetramer. Forms heterotetrameric channels composed of two GluN1/zeta subunits (GRIN1), and two identical GluN2/epsilon subunits (GRIN2A, GRIN2B, GRIN2C or GRIN2D) or GluN3 subunits (GRIN3A or GRIN3B) (in vitro). In vivo, the subunit composition may depend on the expression levels of the different subunits. Interacts with PDZ domains of PATJ and DLG4. As to expression, detected in neonate brain synaptosomes (at protein level).

The protein localises to the cell membrane. It localises to the postsynaptic cell membrane. The enzyme catalyses Ca(2+)(in) = Ca(2+)(out). It catalyses the reaction Na(+)(in) = Na(+)(out). The catalysed reaction is K(+)(in) = K(+)(out). In terms of biological role, component of N-methyl-D-aspartate (NMDA) receptors (NMDARs) that function as heterotetrameric, ligand-gated cation channels with high calcium permeability and voltage-dependent block by Mg(2+). Participates in synaptic plasticity for learning and memory formation. Channel activation requires binding of the neurotransmitter L-glutamate to the GluN2 subunit, glycine or D-serine binding to the GluN1 subunit, plus membrane depolarization to eliminate channel inhibition by Mg(2+). NMDARs mediate simultaneously the potasium efflux and the influx of calcium and sodium. Each GluN2 subunit confers differential attributes to channel properties, including activation, deactivation and desensitization kinetics, pH sensitivity, Ca2(+) permeability, and binding to allosteric modulators. The chain is Glutamate receptor ionotropic, NMDA 2D from Mus musculus (Mouse).